The primary structure comprises 813 residues: Leucine--tRNA ligase (813 aa).

Residues 42 to 52 carry the 'HIGH' region motif; that stretch reads PYTSGNLHIGH. Residues 580 to 584 carry the 'KMSKS' region motif; it reads KMSKS. Lysine 583 is a binding site for ATP.

Belongs to the class-I aminoacyl-tRNA synthetase family.

The protein localises to the cytoplasm. The catalysed reaction is tRNA(Leu) + L-leucine + ATP = L-leucyl-tRNA(Leu) + AMP + diphosphate. In Dehalococcoides mccartyi (strain ATCC BAA-2266 / KCTC 15142 / 195) (Dehalococcoides ethenogenes (strain 195)), this protein is Leucine--tRNA ligase.